Here is a 136-residue protein sequence, read N- to C-terminus: Nucleoside diphosphate kinase (136 aa).

ATP-binding residues include Lys-10, Phe-58, Arg-86, Thr-92, Arg-104, and Asn-114. The Pros-phosphohistidine intermediate role is filled by His-117.

The protein belongs to the NDK family. In terms of assembly, homotetramer. The cofactor is Mg(2+).

The protein resides in the cytoplasm. It carries out the reaction a 2'-deoxyribonucleoside 5'-diphosphate + ATP = a 2'-deoxyribonucleoside 5'-triphosphate + ADP. It catalyses the reaction a ribonucleoside 5'-diphosphate + ATP = a ribonucleoside 5'-triphosphate + ADP. Its function is as follows. Major role in the synthesis of nucleoside triphosphates other than ATP. The ATP gamma phosphate is transferred to the NDP beta phosphate via a ping-pong mechanism, using a phosphorylated active-site intermediate. This Mycobacterium ulcerans (strain Agy99) protein is Nucleoside diphosphate kinase.